Here is a 723-residue protein sequence, read N- to C-terminus: Tryptophan 2-monooxygenase (723 aa).

Ser-218, Glu-238, Arg-246, and Arg-266 together coordinate FMN. Position 266 (Arg-266) interacts with substrate.

This sequence belongs to the tryptophan 2-monooxygenase family. FMN is required as a cofactor.

It carries out the reaction L-tryptophan + O2 = indole-3-acetamide + CO2 + H2O. It functions in the pathway plant hormone metabolism; auxin biosynthesis. This chain is Tryptophan 2-monooxygenase (iaaM), found in Allorhizobium ampelinum (strain ATCC BAA-846 / DSM 112012 / S4) (Agrobacterium vitis (strain S4)).